A 291-amino-acid polypeptide reads, in one-letter code: MAETSALPTGFGELEVLAVGMVLLVEALSGLSLNTLTIFSFCKTPELRTPCHLLVLSLALADSGISLNALVAATSSLLRRWPYGSDGCQAHGFQGFVTALASICSSAAIAWGRYHHYCTRSQLAWNSAVSLVLFVWLSSAFWAALPLLGWGHYDYEPLGTCCTLDYSKGDRNFTSFLFTMSFFNFAMPLFITITSYSLMEQKLGKSGHLQVNTTLPARTLLLGWGPYAILYLYAVIADVTSISPKLQMVPALIAKMVPTINAINYALGNEMVCRGIWQCLSPQKREKDRTK.

Over 1 to 15 (MAETSALPTGFGELE) the chain is Extracellular. Residues 16–36 (VLAVGMVLLVEALSGLSLNTL) traverse the membrane as a helical segment. The Cytoplasmic portion of the chain corresponds to 37 to 52 (TIFSFCKTPELRTPCH). The chain crosses the membrane as a helical span at residues 53–73 (LLVLSLALADSGISLNALVAA). Residues 74 to 91 (TSSLLRRWPYGSDGCQAH) are Extracellular-facing. Cys88 and Cys162 are joined by a disulfide. The helical transmembrane segment at 92–112 (GFQGFVTALASICSSAAIAWG) threads the bilayer. At 113–130 (RYHHYCTRSQLAWNSAVS) the chain is on the cytoplasmic side. A helical membrane pass occupies residues 131–151 (LVLFVWLSSAFWAALPLLGWG). The Extracellular portion of the chain corresponds to 152–175 (HYDYEPLGTCCTLDYSKGDRNFTS). N-linked (GlcNAc...) asparagine glycosylation occurs at Asn172. A helical transmembrane segment spans residues 176–196 (FLFTMSFFNFAMPLFITITSY). The Cytoplasmic segment spans residues 197–219 (SLMEQKLGKSGHLQVNTTLPART). The helical transmembrane segment at 220-240 (LLLGWGPYAILYLYAVIADVT) threads the bilayer. The Extracellular segment spans residues 241 to 247 (SISPKLQ). The helical transmembrane segment at 248 to 268 (MVPALIAKMVPTINAINYALG) threads the bilayer. Lys255 carries the N6-(retinylidene)lysine modification. Topologically, residues 269-291 (NEMVCRGIWQCLSPQKREKDRTK) are cytoplasmic.

Belongs to the G-protein coupled receptor 1 family. Opsin subfamily. Post-translationally, covalently binds all-trans- and 11-cis-retinal. In terms of tissue distribution, preferentially expressed at high levels in the retinal pigment epithelium (RPE) and Mueller cells of the neural retina.

It localises to the membrane. In terms of biological role, receptor for all-trans- and 11-cis-retinal. Binds preferentially to the former and may catalyze the isomerization of the chromophore by a retinochrome-like mechanism. This is RPE-retinal G protein-coupled receptor (RGR) from Homo sapiens (Human).